The chain runs to 139 residues: Small ribosomal subunit protein uS12 (139 aa).

The disordered stretch occupies residues 12–55 (RVDKVKKSDSPALNKGYNSFKKSQTDVSSPQKRGVCTRVGTMTP). The span at 27-42 (GYNSFKKSQTDVSSPQ) shows a compositional bias: polar residues. D102 is modified (3-methylthioaspartic acid). The segment at 119 to 139 (GVQNRMQGRSKYGTKKPKDKK) is disordered. Basic residues predominate over residues 130-139 (YGTKKPKDKK).

This sequence belongs to the universal ribosomal protein uS12 family. In terms of assembly, part of the 30S ribosomal subunit. Contacts proteins S8 and S17. May interact with IF1 in the 30S initiation complex.

With S4 and S5 plays an important role in translational accuracy. In terms of biological role, interacts with and stabilizes bases of the 16S rRNA that are involved in tRNA selection in the A site and with the mRNA backbone. Located at the interface of the 30S and 50S subunits, it traverses the body of the 30S subunit contacting proteins on the other side and probably holding the rRNA structure together. The combined cluster of proteins S8, S12 and S17 appears to hold together the shoulder and platform of the 30S subunit. This chain is Small ribosomal subunit protein uS12, found in Shouchella clausii (strain KSM-K16) (Alkalihalobacillus clausii).